The primary structure comprises 88 residues: Small ribosomal subunit protein uS17 (88 aa).

It belongs to the universal ribosomal protein uS17 family. As to quaternary structure, part of the 30S ribosomal subunit.

Its function is as follows. One of the primary rRNA binding proteins, it binds specifically to the 5'-end of 16S ribosomal RNA. This Oenococcus oeni (strain ATCC BAA-331 / PSU-1) protein is Small ribosomal subunit protein uS17.